The sequence spans 520 residues: Probable cytochrome P450 4p2 (520 aa).

Heme-binding residues include glutamate 325 and cysteine 464.

It belongs to the cytochrome P450 family. Heme serves as cofactor.

The protein localises to the endoplasmic reticulum membrane. Its subcellular location is the microsome membrane. Its function is as follows. May be involved in the metabolism of insect hormones and in the breakdown of synthetic insecticides. The polypeptide is Probable cytochrome P450 4p2 (Cyp4p2) (Drosophila melanogaster (Fruit fly)).